We begin with the raw amino-acid sequence, 420 residues long: D-tagatose-1,6-bisphosphate aldolase subunit GatZ (420 aa).

This sequence belongs to the GatZ/KbaZ family. GatZ subfamily. In terms of assembly, forms a complex with GatY.

It functions in the pathway carbohydrate metabolism; D-tagatose 6-phosphate degradation; D-glyceraldehyde 3-phosphate and glycerone phosphate from D-tagatose 6-phosphate: step 2/2. Component of the tagatose-1,6-bisphosphate aldolase GatYZ that is required for full activity and stability of the Y subunit. Could have a chaperone-like function for the proper and stable folding of GatY. When expressed alone, GatZ does not show any aldolase activity. Is involved in the catabolism of galactitol. The polypeptide is D-tagatose-1,6-bisphosphate aldolase subunit GatZ (Escherichia coli O9:H4 (strain HS)).